A 413-amino-acid polypeptide reads, in one-letter code: 3-hydroxy-3-methylglutaryl-coenzyme A reductase (413 aa).

Active-site charge relay system residues include E106 and D312. The Proton donor role is filled by H408.

It belongs to the HMG-CoA reductase family.

It carries out the reaction (R)-mevalonate + 2 NADP(+) + CoA = (3S)-3-hydroxy-3-methylglutaryl-CoA + 2 NADPH + 2 H(+). Its pathway is metabolic intermediate biosynthesis; (R)-mevalonate biosynthesis; (R)-mevalonate from acetyl-CoA: step 3/3. In terms of biological role, converts HMG-CoA to mevalonate. The chain is 3-hydroxy-3-methylglutaryl-coenzyme A reductase (hmgA) from Pyrococcus horikoshii (strain ATCC 700860 / DSM 12428 / JCM 9974 / NBRC 100139 / OT-3).